We begin with the raw amino-acid sequence, 258 residues long: Cobalt-precorrin-4 C(11)-methyltransferase (258 aa).

Belongs to the precorrin methyltransferase family. In terms of assembly, homodimer.

It catalyses the reaction Co-precorrin-4 + S-adenosyl-L-methionine = Co-precorrin-5A + S-adenosyl-L-homocysteine + H(+). It functions in the pathway cofactor biosynthesis; adenosylcobalamin biosynthesis; cob(II)yrinate a,c-diamide from sirohydrochlorin (anaerobic route): step 4/10. Its function is as follows. Catalyzes the methylation of C-11 in cobalt-precorrin-4 to form cobalt-precorrin-5A. The protein is Cobalt-precorrin-4 C(11)-methyltransferase (cbiF) of Priestia megaterium (Bacillus megaterium).